The following is a 115-amino-acid chain: Phosphoribosyl-AMP cyclohydrolase (115 aa).

D80 provides a ligand contact to Mg(2+). C81 is a binding site for Zn(2+). 2 residues coordinate Mg(2+): D82 and D84. Positions 97 and 104 each coordinate Zn(2+).

It belongs to the PRA-CH family. In terms of assembly, homodimer. Mg(2+) is required as a cofactor. The cofactor is Zn(2+).

It is found in the cytoplasm. The enzyme catalyses 1-(5-phospho-beta-D-ribosyl)-5'-AMP + H2O = 1-(5-phospho-beta-D-ribosyl)-5-[(5-phospho-beta-D-ribosylamino)methylideneamino]imidazole-4-carboxamide. It participates in amino-acid biosynthesis; L-histidine biosynthesis; L-histidine from 5-phospho-alpha-D-ribose 1-diphosphate: step 3/9. Its function is as follows. Catalyzes the hydrolysis of the adenine ring of phosphoribosyl-AMP. The polypeptide is Phosphoribosyl-AMP cyclohydrolase (Nocardia farcinica (strain IFM 10152)).